Consider the following 206-residue polypeptide: dITP/XTP pyrophosphatase (206 aa).

Position 7–12 (7–12 (SSHGYK)) interacts with substrate. Catalysis depends on D70, which acts as the Proton acceptor. D70 serves as a coordination point for Mg(2+). Residues T71, 154–157 (FGYD), K177, and 182–183 (HR) each bind substrate.

This sequence belongs to the HAM1 NTPase family. In terms of assembly, homodimer. It depends on Mg(2+) as a cofactor.

The catalysed reaction is XTP + H2O = XMP + diphosphate + H(+). It carries out the reaction dITP + H2O = dIMP + diphosphate + H(+). It catalyses the reaction ITP + H2O = IMP + diphosphate + H(+). Functionally, pyrophosphatase that catalyzes the hydrolysis of nucleoside triphosphates to their monophosphate derivatives, with a high preference for the non-canonical purine nucleotides XTP (xanthosine triphosphate), dITP (deoxyinosine triphosphate) and ITP. Seems to function as a house-cleaning enzyme that removes non-canonical purine nucleotides from the nucleotide pool, thus preventing their incorporation into DNA/RNA and avoiding chromosomal lesions. This chain is dITP/XTP pyrophosphatase, found in Chlamydia abortus (strain DSM 27085 / S26/3) (Chlamydophila abortus).